Here is a 351-residue protein sequence, read N- to C-terminus: Rhodopsin (351 aa).

Residues Met1–Ala36 are Extracellular-facing. 2 N-linked (GlcNAc...) asparagine glycosylation sites follow: Asn2 and Asn15. Residues Tyr37–Val61 traverse the membrane as a helical segment. Residues Thr62–Asn73 lie on the Cytoplasmic side of the membrane. A helical transmembrane segment spans residues Tyr74 to Tyr96. Topologically, residues Thr97–Cys110 are extracellular. Cys110 and Cys187 are disulfide-bonded. The helical transmembrane segment at Asn111–Ile133 threads the bilayer. The short motif at Glu134–Trp136 is the 'Ionic lock' involved in activated form stabilization element. At Glu134–His152 the chain is on the cytoplasmic side. Residues Ala153–Val173 traverse the membrane as a helical segment. The Extracellular portion of the chain corresponds to Gly174 to Ser202. Asn200 carries N-linked (GlcNAc...) asparagine glycosylation. A helical membrane pass occupies residues Phe203–Gly224. Residues Arg225 to Arg252 are Cytoplasmic-facing. Residues Met253–Phe274 form a helical membrane-spanning segment. The Extracellular segment spans residues Ile275–Leu286. Residues Phe287 to Cys308 traverse the membrane as a helical segment. Position 296 is an N6-(retinylidene)lysine (Lys296). At Met309–Ala351 the chain is on the cytoplasmic side. Cys323 is lipidated: S-palmitoyl cysteine. The interval Gly330–Ala351 is disordered. The span at Ala335–Ala351 shows a compositional bias: low complexity.

Belongs to the G-protein coupled receptor 1 family. Opsin subfamily. Post-translationally, phosphorylated on some or all of the serine and threonine residues present in the C-terminal region. In terms of processing, contains one covalently linked retinal chromophore.

Its subcellular location is the membrane. It localises to the cell projection. It is found in the cilium. The protein localises to the photoreceptor outer segment. In terms of biological role, photoreceptor required for image-forming vision at low light intensity. While most salt water fish species use retinal as chromophore, most freshwater fish use 3-dehydroretinal, or a mixture of retinal and 3-dehydroretinal. Light-induced isomerization of 11-cis to all-trans retinal triggers a conformational change that activates signaling via G-proteins. Subsequent receptor phosphorylation mediates displacement of the bound G-protein alpha subunit by arrestin and terminates signaling. This chain is Rhodopsin (rho), found in Sargocentron diadema (Crown squirrelfish).